Here is a 243-residue protein sequence, read N- to C-terminus: Zinc import ATP-binding protein ZnuC (243 aa).

The 216-residue stretch at 4–219 (IAAHHLAVRR…PEYRALFGHG (216 aa)) folds into the ABC transporter domain. 36-43 (GPNGSGKS) contributes to the ATP binding site.

This sequence belongs to the ABC transporter superfamily. Zinc importer (TC 3.A.1.15.5) family. In terms of assembly, the complex is composed of two ATP-binding proteins (ZnuC), two transmembrane proteins (ZnuB) and a solute-binding protein (ZnuA).

Its subcellular location is the cell inner membrane. It carries out the reaction Zn(2+)(out) + ATP(in) + H2O(in) = Zn(2+)(in) + ADP(in) + phosphate(in) + H(+)(in). In terms of biological role, part of the ABC transporter complex ZnuABC involved in zinc import. Responsible for energy coupling to the transport system. This Cereibacter sphaeroides (strain ATCC 17023 / DSM 158 / JCM 6121 / CCUG 31486 / LMG 2827 / NBRC 12203 / NCIMB 8253 / ATH 2.4.1.) (Rhodobacter sphaeroides) protein is Zinc import ATP-binding protein ZnuC.